Here is a 343-residue protein sequence, read N- to C-terminus: MKVAILGAGCYRTHAAAGITNFSRASEVAKQVGIPEIAMTHSTILMGAELLHLVNEIDEIVIADPCFAEGNEMVVLDNFDYAKVMEAHLAGKAEEVMPEIRDAVKAKAKELPKPPKACIHFVNPEKVGLKVTADDKDAVKDADIVITWLPKGGSQPAIIEKFVANIKEGAIVTHACTIPTPKFAKIFKDLGRDDLNIISYHPGAVPEMKGQVFISEGFATEEAVENFFEIANTARGVAFKMPANLISPVCDMGSAVTAPVYAGILAYRDAVTQILGAPADFAQMMADEAITQILELMRNEGIKGMEDKLDPKALTGTADSMCFGPLADILPASLKVLEKHGKQ.

The protein belongs to the HMD family.

The enzyme catalyses 5,10-methenyl-5,6,7,8-tetrahydromethanopterin + H2 = 5,10-methylenetetrahydromethanopterin + H(+). It participates in one-carbon metabolism; methanogenesis from CO(2); 5,10-methylene-5,6,7,8-tetrahydromethanopterin from 5,10-methenyl-5,6,7,8-tetrahydromethanopterin (hydrogen route): step 1/1. Catalyzes the reversible reduction of methenyl-H(4)MPT(+) to methylene-H(4)MPT. The protein is 5,10-methenyltetrahydromethanopterin hydrogenase (hmd) of Methanococcus voltae.